A 157-amino-acid chain; its full sequence is Ribonuclease H (157 aa).

In terms of domain architecture, RNase H type-1 spans 5–146; sequence IMKQVEIFTD…CDDLARTAAE (142 aa). Mg(2+) is bound by residues D14, E52, D74, and D138.

The protein belongs to the RNase H family. As to quaternary structure, monomer. Mg(2+) is required as a cofactor.

It localises to the cytoplasm. It carries out the reaction Endonucleolytic cleavage to 5'-phosphomonoester.. Endonuclease that specifically degrades the RNA of RNA-DNA hybrids. In Aliivibrio salmonicida (strain LFI1238) (Vibrio salmonicida (strain LFI1238)), this protein is Ribonuclease H.